A 183-amino-acid polypeptide reads, in one-letter code: Capsid protein (183 aa).

Residues 136–183 form a disordered region; it reads NAPILSTLPETTVVRRRGRSPRRRTPSPRRRRSQSPRRRRSQSRESQC. Residues 149–176 show a composition bias toward basic residues; sequence VRRRGRSPRRRTPSPRRRRSQSPRRRRS. 3 positions are modified to phosphoserine; by host: S155, S162, and S170. Residues 155–161 form a 1; half-length repeat; the sequence is SPRRRTP. The 3 X 8 AA repeats of S-P-R-R-R-[PR]-S-Q stretch occupies residues 155 to 177; that stretch reads SPRRRTPSPRRRRSQSPRRRRSQ. The Bipartite nuclear localization signal signature appears at 158-175; sequence RRTPSPRRRRSQSPRRRR. Repeat copies occupy residues 162–169 and 170–177. The tract at residues 177–183 is RNA binding; the sequence is QSRESQC.

The protein belongs to the orthohepadnavirus core antigen family. Homodimerizes, then multimerizes. Interacts with cytosol exposed regions of viral L glycoprotein present in the reticulum-to-Golgi compartment. Interacts with human FLNB. Phosphorylated form interacts with host importin alpha; this interaction depends on the exposure of the NLS, which itself depends upon genome maturation and/or phosphorylation of the capsid protein. Interacts with host NUP153. Post-translationally, phosphorylated by host SRPK1, SRPK2, and maybe protein kinase C or GAPDH. Phosphorylation is critical for pregenomic RNA packaging. Protein kinase C phosphorylation is stimulated by HBx protein and may play a role in transport of the viral genome to the nucleus at the late step during the viral replication cycle.

The protein resides in the virion. It localises to the host cytoplasm. Functionally, self assembles to form an icosahedral capsid. Most capsids appear to be large particles with an icosahedral symmetry of T=4 and consist of 240 copies of capsid protein, though a fraction forms smaller T=3 particles consisting of 180 capsid proteins. Entering capsids are transported along microtubules to the nucleus. Phosphorylation of the capsid is thought to induce exposure of nuclear localization signal in the C-terminal portion of the capsid protein that allows binding to the nuclear pore complex via the importin (karyopherin-) alpha and beta. Capsids are imported in intact form through the nuclear pore into the nuclear basket, where it probably binds NUP153. Only capsids that contain the mature viral genome can release the viral DNA and capsid protein into the nucleoplasm. Immature capsids get stuck in the basket. Capsids encapsulate the pre-genomic RNA and the P protein. Pre-genomic RNA is reverse-transcribed into DNA while the capsid is still in the cytoplasm. The capsid can then either be directed to the nucleus, providing more genomes for transcription, or bud through the endoplasmic reticulum to provide new virions. This is Capsid protein from Hepatitis B virus genotype D subtype ayw (isolate France/Tiollais/1979) (HBV-D).